We begin with the raw amino-acid sequence, 688 residues long: Elongation factor G (688 aa).

Residues 8 to 282 (EKFRNFGIMA…GVVDYLPSPL (275 aa)) enclose the tr-type G domain. Residues 17-24 (AHIDAGKT), 81-85 (DTPGH), and 135-138 (NKMD) each bind GTP.

It belongs to the TRAFAC class translation factor GTPase superfamily. Classic translation factor GTPase family. EF-G/EF-2 subfamily.

The protein resides in the cytoplasm. In terms of biological role, catalyzes the GTP-dependent ribosomal translocation step during translation elongation. During this step, the ribosome changes from the pre-translocational (PRE) to the post-translocational (POST) state as the newly formed A-site-bound peptidyl-tRNA and P-site-bound deacylated tRNA move to the P and E sites, respectively. Catalyzes the coordinated movement of the two tRNA molecules, the mRNA and conformational changes in the ribosome. This chain is Elongation factor G, found in Clostridium perfringens (strain 13 / Type A).